The chain runs to 281 residues: Apulose-4-phosphate transketolase subunit A (281 aa).

It belongs to the transketolase family. In terms of assembly, probable heterodimer composed of AptA and AptB. Thiamine diphosphate is required as a cofactor.

It catalyses the reaction apulose 4-phosphate + D-glyceraldehyde 3-phosphate = D-xylulose 5-phosphate + dihydroxyacetone phosphate. The protein operates within carbohydrate metabolism. Functionally, involved in catabolism of D-apiose. Catalyzes the transfer of the glycolaldehyde group from apulose-4-phosphate to D-glyceraldehyde 3-phosphate, generating dihydroxyacetone phosphate and D-xylulose-5-phosphate. The polypeptide is Apulose-4-phosphate transketolase subunit A (Phocaeicola vulgatus (strain ATCC 8482 / DSM 1447 / JCM 5826 / CCUG 4940 / NBRC 14291 / NCTC 11154) (Bacteroides vulgatus)).